A 138-amino-acid chain; its full sequence is Putative pre-16S rRNA nuclease (138 aa).

Belongs to the YqgF nuclease family.

It is found in the cytoplasm. Its function is as follows. Could be a nuclease involved in processing of the 5'-end of pre-16S rRNA. The protein is Putative pre-16S rRNA nuclease of Bacillus pumilus (strain SAFR-032).